Consider the following 702-residue polypeptide: NAD(P)H-quinone oxidoreductase subunit 5, chloroplastic (702 aa).

Transmembrane regions (helical) follow at residues 7 to 27 (YVWIIPLLPCLTAVILGLGLI), 40 to 60 (SAILSIGALLVTMLLSITVLW), 91 to 111 (PLSAIMLVLVTTVGVLVMIYT), 124 to 144 (FFAYLSLFTASMLGLVLSPNL), 147 to 167 (VYAFWELVGMCSYLLVGFWFT), 189 to 209 (LLLGILALYWLTGSLEFDIVA), 224 to 244 (VLLTVCCVLLFLGPIAKSAQF), 258 to 278 (TPISALIHAATMVAAGVYLVA), 289 to 309 (LVMDIVAWTGGITAVLGATVA), 327 to 347 (LGYMILALGVGSYQAGLFHLI), 354 to 374 (ALLFLGSGSVIHGIEPVVGYN), 395 to 415 (GVTFLIGTLSLCGVPPFACFW), 427 to 447 (KLPVLGLLAWLTAGLTAFYMF), 511 to 531 (IPLIVLTIPTILIGFIGAPLP), 562 to 582 (FAITALPSVSIGILGAFIAWI), and 680 to 700 (IFVLGIGLVFVMIAAVLFNFF).

It belongs to the complex I subunit 5 family. In terms of assembly, NDH is composed of at least 16 different subunits, 5 of which are encoded in the nucleus.

It localises to the plastid. It is found in the chloroplast thylakoid membrane. It carries out the reaction a plastoquinone + NADH + (n+1) H(+)(in) = a plastoquinol + NAD(+) + n H(+)(out). The catalysed reaction is a plastoquinone + NADPH + (n+1) H(+)(in) = a plastoquinol + NADP(+) + n H(+)(out). Functionally, NDH shuttles electrons from NAD(P)H:plastoquinone, via FMN and iron-sulfur (Fe-S) centers, to quinones in the photosynthetic chain and possibly in a chloroplast respiratory chain. The immediate electron acceptor for the enzyme in this species is believed to be plastoquinone. Couples the redox reaction to proton translocation, and thus conserves the redox energy in a proton gradient. In Zygnema circumcarinatum (Green alga), this protein is NAD(P)H-quinone oxidoreductase subunit 5, chloroplastic (ndhF).